The sequence spans 514 residues: ATP synthase subunit alpha (514 aa).

170 to 177 (GDRQTGKT) is a binding site for ATP.

The protein belongs to the ATPase alpha/beta chains family. F-type ATPases have 2 components, CF(1) - the catalytic core - and CF(0) - the membrane proton channel. CF(1) has five subunits: alpha(3), beta(3), gamma(1), delta(1), epsilon(1). CF(0) has three main subunits: a(1), b(2) and c(9-12). The alpha and beta chains form an alternating ring which encloses part of the gamma chain. CF(1) is attached to CF(0) by a central stalk formed by the gamma and epsilon chains, while a peripheral stalk is formed by the delta and b chains.

The protein resides in the cell inner membrane. The catalysed reaction is ATP + H2O + 4 H(+)(in) = ADP + phosphate + 5 H(+)(out). Functionally, produces ATP from ADP in the presence of a proton gradient across the membrane. The alpha chain is a regulatory subunit. The polypeptide is ATP synthase subunit alpha (Psychrobacter arcticus (strain DSM 17307 / VKM B-2377 / 273-4)).